The chain runs to 420 residues: Methyltransferase/ribosomally synthesized cyclic peptide gymnopeptides precursor gymMA1 (420 aa).

The methyltransferase domain stretch occupies residues 1 to 251 (MQSSTQKQAG…GISTFYIPPK (251 aa)). Residues Arg-72, Tyr-76, and Tyr-98 contribute to the active site. Residues Tyr-98, His-100, Val-103, Ala-130, Gln-172, Ala-213, Ser-244, and Thr-245 each coordinate S-adenosyl-L-methionine. The tract at residues 252-378 (ELKDPSMDIM…WALRCAMKKM (127 aa)) is clasp domain. The tract at residues 379–392 (PSSFMDEVDANNLP) is precursor leader. N-methylvaline is present on residues Val-394 and Val-396. N-methylglycine is present on Gly-398. The residue at position 399 (Val-399) is an N-methylvaline. Ala-400 bears the N-methylalanine mark. Gly-402 is subject to N-methylglycine. An N-methylvaline mark is found at Val-404, Val-406, Val-408, and Val-410.

The protein in the N-terminal section; belongs to the precorrin methyltransferase family. Homodimer. Post-translationally, gymMA1 automethylates at Val-394, Val-396, Gly-398, Val-399, Ala-400, Gly-402, Val-404, Val-406, Val-408 and Val-410 before being processed by a prolyloligopeptidase which likely forms a peptidyl ester upon removal of the follower propeptide, which then undergoes macrocyclization with the N-terminus of the modified core peptide. Peptide backbone alpha-N-methylations change the physicochemical properties of amide bonds to provide structural constraints and other favorable characteristics including biological membrane permeability to peptides.

It participates in mycotoxin biosynthesis. Fusion protein of the methyltransferase gymM1 and the gymnopeptides precursor; part of the gene cluster that mediates the biosynthesis of gymnopeptides, highly methylated cyclic octadecapeptides with striking antiproliferative activity on several human cancer cell lines. Gymnopeptides derive from the C-terminus of the gymMA1 protein, and it is the gymMA1 protein that methylates its own C-terminus using S-adenosyl methionine (SAM). The C-terminus is subsequently cleaved off and macrocyclized by a prolyloligopeptidase to give the final product. The sequence is that of Methyltransferase/ribosomally synthesized cyclic peptide gymnopeptides precursor gymMA1 from Gymnopus fusipes (Spindle toughshank).